We begin with the raw amino-acid sequence, 252 residues long: Type II secretion system protein N (252 aa).

Residues 1–4 (MKQK) are Cytoplasmic-facing. Residues 5–25 (VLIAALFLVAYLGFLLVKLPA) traverse the membrane as a helical segment. Over 26 to 252 (TLVVRHLPLP…RFPLRYQGRI (227 aa)) the chain is Periplasmic.

The protein belongs to the GSP N family.

It is found in the cell inner membrane. Its function is as follows. Involved in a type II secretion system (T2SS, formerly general secretion pathway, GSP) for the export of proteins. The protein is Type II secretion system protein N (exeN) of Aeromonas hydrophila.